The sequence spans 124 residues: uncharacterized protein (124 aa).

The protein resides in the cytoplasm. It is found in the nucleus. This is an uncharacterized protein from Schizosaccharomyces pombe (strain 972 / ATCC 24843) (Fission yeast).